We begin with the raw amino-acid sequence, 430 residues long: Trigger factor (430 aa).

A PPIase FKBP-type domain is found at 163–248 (GDTVVFDFAG…IHEIKAQELP (86 aa)).

This sequence belongs to the FKBP-type PPIase family. Tig subfamily.

The protein resides in the cytoplasm. It catalyses the reaction [protein]-peptidylproline (omega=180) = [protein]-peptidylproline (omega=0). Its function is as follows. Involved in protein export. Acts as a chaperone by maintaining the newly synthesized protein in an open conformation. Functions as a peptidyl-prolyl cis-trans isomerase. This Exiguobacterium sibiricum (strain DSM 17290 / CCUG 55495 / CIP 109462 / JCM 13490 / 255-15) protein is Trigger factor.